We begin with the raw amino-acid sequence, 221 residues long: uncharacterized protein (221 aa).

The 189-residue stretch at 1-189 (MDSGKDTNGY…NVVYCSEKAV (189 aa)) folds into the Peptidase S8 domain.

It belongs to the peptidase S8 family.

This is an uncharacterized protein from Aquifex aeolicus (strain VF5).